The sequence spans 758 residues: 5-methyltetrahydropteroyltriglutamate--homocysteine methyltransferase (758 aa).

5-methyltetrahydropteroyltri-L-glutamate-binding positions include 16 to 19 (RELK) and Lys117. L-homocysteine is bound by residues 436-438 (IGS) and Glu489. Residues 436-438 (IGS) and Glu489 contribute to the L-methionine site. 5-methyltetrahydropteroyltri-L-glutamate is bound by residues 520-521 (RC) and Trp566. Asp604 lines the L-homocysteine pocket. Asp604 is a binding site for L-methionine. Glu610 contributes to the 5-methyltetrahydropteroyltri-L-glutamate binding site. Zn(2+)-binding residues include His646, Cys648, and Glu670. The active-site Proton donor is His699. Residue Cys731 coordinates Zn(2+).

It belongs to the vitamin-B12 independent methionine synthase family. Zn(2+) is required as a cofactor.

It carries out the reaction 5-methyltetrahydropteroyltri-L-glutamate + L-homocysteine = tetrahydropteroyltri-L-glutamate + L-methionine. It participates in amino-acid biosynthesis; L-methionine biosynthesis via de novo pathway; L-methionine from L-homocysteine (MetE route): step 1/1. In terms of biological role, catalyzes the transfer of a methyl group from 5-methyltetrahydrofolate to homocysteine resulting in methionine formation. This Ruthia magnifica subsp. Calyptogena magnifica protein is 5-methyltetrahydropteroyltriglutamate--homocysteine methyltransferase.